The chain runs to 2776 residues: Microtubule-associated protein 1A (2776 aa).

Phosphoserine occurs at positions 114, 117, 118, 121, and 155. Y177 bears the Phosphotyrosine mark. The tract at residues 310–331 is disordered; it reads PSKIKHRADSKESLKAAPKTAM. Phosphoserine occurs at positions 319 and 322. Copy 1 of the repeat occupies 336–338; it reads KRE. Residues 336–541 are 11 X 3 AA approximate repeats of K-K-[DE]; it reads KREEVLEEGA…TQDFEELKRE (206 aa). Residues 345-390 show a composition bias toward basic and acidic residues; the sequence is AKEARSELAKELAKSEKKAKEPSEKPPEKPSKPERVRTESSEALKA. 8 disordered regions span residues 345–678, 738–809, 846–1076, 1094–1210, 1223–1651, 1685–1729, 1744–1848, and 1866–2648; these read AKEA…KAES, TIPG…TELT, EDQS…AGGQ, ETGE…ESLG, EKGP…SPEQ, DGQG…FKDF, LAES…APFS, and AELE…NGLK. S384 bears the Phosphoserine mark. A compositionally biased stretch (basic residues) spans 391–406; sequence EKRKLIKDKVGKKHLK. 2 stretches are compositionally biased toward basic and acidic residues: residues 407–464 and 484–500; these read EKIS…KPDL and LKVDKGRAARGEKELSS. Repeat copies occupy residues 415–417, 420–422, 424–426, 427–429, 431–433, 436–438, 440–442, 444–446, and 449–451. T504 is modified (phosphothreonine). Residues S526 and S527 each carry the phosphoserine modification. Over residues 536 to 556 the composition is skewed to basic and acidic residues; the sequence is EELKREERGLLAEPRDTELGE. Repeat 11 spans residues 539–541; the sequence is KRE. Polar residues predominate over residues 567 to 579; that stretch reads GRPSTAIQVTQPP. Over residues 587–631 the composition is skewed to basic and acidic residues; sequence QVEREKEVVPDFPEDKGSKNRAPDSGAEVEREKETWEERKPREAE. 2 positions are modified to phosphoserine: S604 and S611. T633 bears the Phosphothreonine mark. Over residues 640–667 the composition is skewed to basic and acidic residues; it reads AREESEPEVKEDVIEKAELEEMEEVHPS. 4 positions are modified to phosphoserine: S644, S667, S678, and S786. Composition is skewed to polar residues over residues 785–800, 846–859, and 870–882; these read ASQSAESAVPASSSKT, EDQSVASLTAPQTE, and TVTSIPSSRTEAT. Phosphoserine is present on residues S873, S876, S877, and S890. Phosphothreonine is present on T893. Phosphoserine is present on residues S895, S899, and S908. Positions 944–954 are enriched in polar residues; the sequence is VTTSEKLSSQY. S981, S991, S999, S1008, S1014, S1023, and S1062 each carry phosphoserine. Residue T1068 is modified to Phosphothreonine. Residues 1096–1105 are compositionally biased toward low complexity; that stretch reads GEAGAASGAG. A compositionally biased stretch (basic and acidic residues) spans 1112–1124; sequence RTQEPAEPQKDEL. Phosphoserine is present on residues S1131, S1133, S1147, S1159, S1177, S1187, S1190, S1196, S1205, and S1208. Residues 1179 to 1189 are compositionally biased toward polar residues; the sequence is EDTQSLSFSEE. Over residues 1197–1210 the composition is skewed to polar residues; sequence LDISSKQLSPESLG. Residues 1223–1234 show a composition bias toward basic and acidic residues; that stretch reads EKGPLVKAEDNS. Phosphoserine occurs at positions 1251, 1289, 1310, 1313, and 1316. The segment covering 1302–1317 has biased composition (low complexity); it reads TSDSSLTKSPESLSSP. 6 stretches are compositionally biased toward basic and acidic residues: residues 1332 to 1350, 1370 to 1384, 1391 to 1435, 1449 to 1488, 1499 to 1541, and 1549 to 1599; these read GSEDRATEQKEKELERKSE, SVMHQKDEALDEENK, KTSE…KALE, PRARAQEHRDLEQKDEHLELRDKTPEEKDKVLVLEDRAPE, RAPE…DQDN, and GTLK…EKTR. 3 positions are modified to phosphoserine: S1516, S1580, and S1606. Positions 1609 to 1625 are enriched in basic and acidic residues; the sequence is EEGKAREQEEKYWKEQD. A phosphoserine mark is found at S1634 and S1648. Residues 1709 to 1718 are compositionally biased toward polar residues; sequence QEITPLQHTP. Phosphoserine occurs at positions 1720, 1747, 1762, 1768, and 1772. T1777 bears the Phosphothreonine mark. Residues S1783 and S1789 each carry the phosphoserine modification. Over residues 1794–1808 the composition is skewed to polar residues; it reads TKSTPPTRNEPTTPS. Positions 1823–1844 are enriched in pro residues; the sequence is LPPAPLSPAPAPPTPAPDPHAP. Basic and acidic residues predominate over residues 1878–1890; it reads KDYRKAEGEREGE. Phosphoserine is present on S1902. Composition is skewed to basic and acidic residues over residues 1907-1935 and 1972-1988; these read EVTESHTTRDAEQTEPEQREPTPYPDERS and STKEEAAGRNKSAEKEL. T1928 is modified (phosphothreonine). Polar residues predominate over residues 1990–2006; the sequence is SAVSPPNLHSDTPTFSY. Phosphoserine is present on S1993. Positions 2013 to 2039 are enriched in pro residues; the sequence is TIPPRQEPEPGPNVEPSFTPPAVPPRA. T2031 bears the Phosphothreonine mark. A compositionally biased stretch (polar residues) spans 2042–2058; it reads SLSQDPSPPLNGSTTSC. Residues S2048 and S2082 each carry the phosphoserine modification. Basic and acidic residues predominate over residues 2060-2096; the sequence is PDRRTPSPKEAGRSHWDDGTNDSDLEKGAREQPEKET. The segment covering 2149-2158 has biased composition (pro residues); sequence PAPPQLPSPA. Phosphoserine occurs at positions 2209, 2226, 2230, 2233, and 2234. The segment covering 2231-2242 has biased composition (polar residues); it reads EGSSSEATTPVI. The segment covering 2279–2292 has biased composition (low complexity); sequence PLSPAPLASRDLAP. Positions 2355-2367 are enriched in basic and acidic residues; it reads AEKEEAEALHAWE. The residue at position 2425 (S2425) is a Phosphoserine. The segment covering 2478–2490 has biased composition (low complexity); the sequence is SASDSGSSQSDSD. Positions 2535 to 2551 are enriched in pro residues; the sequence is DPPPAPLPDPRPPPPRP. Over residues 2566–2576 the composition is skewed to basic and acidic residues; sequence GRVERLREKVQ. Phosphoserine occurs at positions 2623 and 2637.

Belongs to the MAP1 family. As to quaternary structure, 3 different light chains, LC1 (a cleavage product of MAP1B), LC2 (a cleavage product of MAP1A) and LC3 (produced by one of the MAP1LC3 genes), can associate with the MAP1A or MAP1B heavy chains. Interacts with guanylate kinase-like domain of DLG1, DLG2 and DLG4. Binds to CSNK1D. Interacts with TIAM2. In terms of assembly, interacts with ELAVL4. Post-translationally, phosphorylated by CSNK1D. In terms of processing, LC2 is generated from MAP1A by proteolytic processing. It is free to associate with both MAP1A and MAP1B. Both isoforms highly expressed in brain, and to a lesser extent in embryo. Isoform 1 is also expressed at a low level in other tissues including heart and muscle.

It is found in the cytoplasm. Its subcellular location is the cytoskeleton. Functionally, structural protein involved in the filamentous cross-bridging between microtubules and other skeletal elements. The protein is Microtubule-associated protein 1A (Map1a) of Mus musculus (Mouse).